We begin with the raw amino-acid sequence, 386 residues long: Alanine racemase 1 (386 aa).

Lys-38 functions as the Proton acceptor; specific for D-alanine in the catalytic mechanism. Lys-38 carries the N6-(pyridoxal phosphate)lysine modification. Arg-136 contacts substrate. The Proton acceptor; specific for L-alanine role is filled by Tyr-267. Met-315 lines the substrate pocket.

It belongs to the alanine racemase family. Requires pyridoxal 5'-phosphate as cofactor.

It carries out the reaction L-alanine = D-alanine. It functions in the pathway amino-acid biosynthesis; D-alanine biosynthesis; D-alanine from L-alanine: step 1/1. Its function is as follows. Catalyzes the interconversion of L-alanine and D-alanine. May also act on other amino acids. The polypeptide is Alanine racemase 1 (alr1) (Clostridium acetobutylicum (strain ATCC 824 / DSM 792 / JCM 1419 / IAM 19013 / LMG 5710 / NBRC 13948 / NRRL B-527 / VKM B-1787 / 2291 / W)).